The sequence spans 292 residues: 2-hydroxy-3-oxopropionate reductase (292 aa).

NAD(+) contacts are provided by residues 4 to 18 (GFIG…MAIN) and Ser-94. Lys-169 is a catalytic residue. Lys-237 is an NAD(+) binding site.

This sequence belongs to the HIBADH-related family.

It catalyses the reaction (R)-glycerate + NADP(+) = 2-hydroxy-3-oxopropanoate + NADPH + H(+). It carries out the reaction (R)-glycerate + NAD(+) = 2-hydroxy-3-oxopropanoate + NADH + H(+). The protein operates within organic acid metabolism; glycolate degradation; 3-phospho-D-glycerate from glycolate: step 3/4. The chain is 2-hydroxy-3-oxopropionate reductase (glxR) from Escherichia coli (strain K12).